The chain runs to 383 residues: Acetylornithine deacetylase (383 aa).

Histidine 80 serves as a coordination point for Zn(2+). Aspartate 82 is an active-site residue. Zn(2+) is bound at residue aspartate 112. Glutamate 144 is a catalytic residue. Zn(2+) is bound by residues glutamate 145, glutamate 169, and histidine 355.

This sequence belongs to the peptidase M20A family. ArgE subfamily. As to quaternary structure, homodimer. The cofactor is Zn(2+). Co(2+) is required as a cofactor. Requires glutathione as cofactor.

It is found in the cytoplasm. The catalysed reaction is N(2)-acetyl-L-ornithine + H2O = L-ornithine + acetate. It participates in amino-acid biosynthesis; L-arginine biosynthesis; L-ornithine from N(2)-acetyl-L-ornithine (linear): step 1/1. Its function is as follows. Catalyzes the hydrolysis of the amide bond of N(2)-acetylated L-amino acids. Cleaves the acetyl group from N-acetyl-L-ornithine to form L-ornithine, an intermediate in L-arginine biosynthesis pathway, and a branchpoint in the synthesis of polyamines. This is Acetylornithine deacetylase from Escherichia coli (strain K12 / MC4100 / BW2952).